The chain runs to 648 residues: Serine/threonine-protein kinase DCLK3 (648 aa).

Disordered stretches follow at residues Asp86 to Val127 and Gln150 to Met345. Composition is skewed to basic and acidic residues over residues Gly98 to Val127, Glu213 to Ser234, Glu255 to Pro266, Leu277 to Pro303, and Thr312 to Ser338. One can recognise a Protein kinase domain in the interval Tyr356 to Ile613. Residues Ile362–Val370 and Lys385 each bind ATP. Catalysis depends on Asp477, which acts as the Proton acceptor. Positions Val628 to Ser648 are disordered.

The protein belongs to the protein kinase superfamily. CAMK Ser/Thr protein kinase family. CaMK subfamily.

It is found in the cytoplasm. It localises to the nucleus. It carries out the reaction L-seryl-[protein] + ATP = O-phospho-L-seryl-[protein] + ADP + H(+). It catalyses the reaction L-threonyl-[protein] + ATP = O-phospho-L-threonyl-[protein] + ADP + H(+). The chain is Serine/threonine-protein kinase DCLK3 (DCLK3) from Homo sapiens (Human).